The chain runs to 920 residues: Isoleucine--tRNA ligase (920 aa).

The 'HIGH' region motif lies at 57–67 (PYANGDIHLGH). Position 560 (glutamate 560) interacts with L-isoleucyl-5'-AMP. The short motif at 601 to 605 (KMSKS) is the 'KMSKS' region element. Lysine 604 lines the ATP pocket. The Zn(2+) site is built by cysteine 890, cysteine 893, cysteine 910, and cysteine 913.

This sequence belongs to the class-I aminoacyl-tRNA synthetase family. IleS type 1 subfamily. In terms of assembly, monomer. It depends on Zn(2+) as a cofactor.

It is found in the cytoplasm. It catalyses the reaction tRNA(Ile) + L-isoleucine + ATP = L-isoleucyl-tRNA(Ile) + AMP + diphosphate. Its function is as follows. Catalyzes the attachment of isoleucine to tRNA(Ile). As IleRS can inadvertently accommodate and process structurally similar amino acids such as valine, to avoid such errors it has two additional distinct tRNA(Ile)-dependent editing activities. One activity is designated as 'pretransfer' editing and involves the hydrolysis of activated Val-AMP. The other activity is designated 'posttransfer' editing and involves deacylation of mischarged Val-tRNA(Ile). The sequence is that of Isoleucine--tRNA ligase from Caldicellulosiruptor bescii (strain ATCC BAA-1888 / DSM 6725 / KCTC 15123 / Z-1320) (Anaerocellum thermophilum).